The primary structure comprises 906 residues: Protein translocase subunit SecA (906 aa).

ATP is bound by residues Gln-87, 105–109, and Asp-512; that span reads GEGKT. The tract at residues 839–896 is disordered; it reads LEEQQRQQSEAAPRTYTHATAESQLADEEAAGEEGHTTFVRDEQKIGRNDPCPCGSGK. The segment covering 871-886 has biased composition (basic and acidic residues); the sequence is EEGHTTFVRDEQKIGR. 4 residues coordinate Zn(2+): Cys-890, Cys-892, Cys-901, and His-902.

The protein belongs to the SecA family. In terms of assembly, monomer and homodimer. Part of the essential Sec protein translocation apparatus which comprises SecA, SecYEG and auxiliary proteins SecDF-YajC and YidC. Zn(2+) is required as a cofactor.

It localises to the cell inner membrane. It is found in the cytoplasm. It catalyses the reaction ATP + H2O + cellular proteinSide 1 = ADP + phosphate + cellular proteinSide 2.. Functionally, part of the Sec protein translocase complex. Interacts with the SecYEG preprotein conducting channel. Has a central role in coupling the hydrolysis of ATP to the transfer of proteins into and across the cell membrane, serving both as a receptor for the preprotein-SecB complex and as an ATP-driven molecular motor driving the stepwise translocation of polypeptide chains across the membrane. The polypeptide is Protein translocase subunit SecA (Aeromonas salmonicida (strain A449)).